The chain runs to 79 residues: UPF0150 protein ssr1765 (79 aa).

It belongs to the UPF0150 family.

The chain is UPF0150 protein ssr1765 from Synechocystis sp. (strain ATCC 27184 / PCC 6803 / Kazusa).